Here is a 345-residue protein sequence, read N- to C-terminus: MNPIINFILLSSMIAGTVLTMTSHHWVSAWLGLELNTLAIIPIISKTHHPRATEASTKYFLIQAASSALMLFAGIINAHLYGTWDITQISNNPTKILLTAALATKLGLAPIHFWLPEILQGVPMLTALIITTWQKIAPMALLITTWNTIPTPMTLTMGFLSVIIGGLGGLNQTQLRKMMAFSSIAHLGWMIVIITITPSLTLFNLVLYITFTSSTMLIMHLTMSKTLQNAMLMSSHSSTTANLFLLSLLSLGGLPPLSGFSPKWLILQELITHNLVPLATTMAITTLFSLMFYLRTTYISAMTLPPSTTPIKNIWRLKPNSSTTMLSMFSLATLFLLPITPTMTQ.

9 helical membrane-spanning segments follow: residues 1-21 (MNPI…VLTM), 60-80 (FLIQ…NAHL), 110-130 (PIHF…ALII), 149-169 (IPTP…GLGG), 179-196 (MAFS…IITI), 200-222 (LTLF…MHLT), 240-260 (TANL…LSGF), 274-294 (NLVP…MFYL), and 323-343 (TTML…TPTM).

It belongs to the complex I subunit 2 family.

It localises to the mitochondrion inner membrane. It catalyses the reaction a ubiquinone + NADH + 5 H(+)(in) = a ubiquinol + NAD(+) + 4 H(+)(out). Core subunit of the mitochondrial membrane respiratory chain NADH dehydrogenase (Complex I) that is believed to belong to the minimal assembly required for catalysis. Complex I functions in the transfer of electrons from NADH to the respiratory chain. The immediate electron acceptor for the enzyme is believed to be ubiquinone. This is NADH-ubiquinone oxidoreductase chain 2 (MT-ND2) from Varanus melinus (Quince monitor lizard).